We begin with the raw amino-acid sequence, 386 residues long: uncharacterized protein (386 aa).

K185 is subject to N6-(pyridoxal phosphate)lysine.

Belongs to the DegT/DnrJ/EryC1 family. Pyridoxal 5'-phosphate is required as a cofactor.

This is an uncharacterized protein from Methanocaldococcus jannaschii (strain ATCC 43067 / DSM 2661 / JAL-1 / JCM 10045 / NBRC 100440) (Methanococcus jannaschii).